The chain runs to 947 residues: MSDTTPEKGSVDSVSPSASNGSNTNNPLNNSSPQPLKSNESDKKPKVTRRSVACKSCHSLKVKCTPSDPNNPSAPCVRCINANRICEIDLNQTRKRRKKSEILEAKRQAGQSLPEHKKEKNTPTQSGYNSSENYSSSINNANDSSLTSRYQSPMTFDPTSPMVFRPQASSAVPPISSNLNPQSAAPTPIPTSGIPPQLPSPHESAILRGNTTSPTSKDDEINQLKQRVRFLETELANKRLLANKKGFSNDSPTDLQSPPFVSKFDLESEISILAESSARLTDLTNQLNEAASRRIQLVSAKKPVDLISKGVITVAEAEERLKLYREQIYGRHPLIAIPDNMHAIEFSQSQPFLFNSIMSACNLITKNADKDVVLAIDNEAMTSVAVEVMVVGTKSVELVKAFSVLCLYYNSPELFKQRRYHMLNTICVSLLHDVGIFARPTYSYNQADGTLKQDASSKDKGNDEYRELVLITYFVTVSTCLVLRRSIYARWTPYVEECCSLLENSSQEKHRRLALFARMNNKLDKIHHIVHAPEMPGQKSGVSQYVIQELQRLLSDLKLKIKDNQYSLLSYYYSIEAYLHEPILTKVFKSDTELDGKAMKSIRYCTSSCLNALDEYSKLTPDQIALLPFPFGSRIMYTAGMLLRLRYLILSLPSHIDKELVPKRAVTSIQCVSKLVEQANILNPHNHYLTKMRLVLQLFIQTYATQVLELLSKNGNTPQNFKPDESETQQLRALAREYNDIRKVSKVSLVSDTRSAEPLDVLSYAATFRRENNDKPSAVAGSLRKSFSENDQAIKTPSQCGQFVSANNTPVPQVINSPPISQTNVPVLHQSQSIINGNNRNSAPLAFNNTTTPSLHQFGDVLPPSSMPQPDYRQFRLPSISNTVHYSSNPRLNANLANPDQLENSYQVLNDEFWSNLLSTDSTDRINFTSNNFNGNTSNDEVFFMNN.

The segment covering 1-10 (MSDTTPEKGS) has biased composition (basic and acidic residues). Residues 1 to 52 (MSDTTPEKGSVDSVSPSASNGSNTNNPLNNSSPQPLKSNESDKKPKVTRRSV) are disordered. A compositionally biased stretch (low complexity) spans 19–38 (SNGSNTNNPLNNSSPQPLKS). A DNA-binding region (zn(2)-C6 fungal-type) is located at residues 54–86 (CKSCHSLKVKCTPSDPNNPSAPCVRCINANRIC). The segment at 96 to 222 (RRKKSEILEA…SPTSKDDEIN (127 aa)) is disordered. Residues 129–142 (NSSENYSSSINNAN) are compositionally biased toward low complexity. Polar residues-rich tracts occupy residues 143–158 (DSSLTSRYQSPMTFDP) and 167–185 (QASSAVPPISSNLNPQSAA).

As to quaternary structure, homodimer.

It localises to the nucleus. Functionally, transcription factor required for yeast cell adherence to silicone substrate. Plays a role in resistance to weak organic acids such as acetate and sorbate. Binds in vitro to a nitric oxide-responsive element (NORE) but seems not to be involved in response to nitrosative stress. The chain is Transcriptional regulator WAR1 (WAR1) from Candida albicans (strain SC5314 / ATCC MYA-2876) (Yeast).